The sequence spans 398 residues: MTQTIPSPNPWSISRPTALLILADGTVIEGKGAGATGVAEGEICFNTAMTGYEEILTDPSYKKQIINFTFPHIGNVGTNSEDIEDLTPLNCHGAVGAIFKADITYPSNYRANENLNQWLKTRKIIALCGVDTRALTVLIREKGSLNGIIIHDPNGNFDIHALKKHAQKWTGLINLDLAKEVTSKQFVEWNEKPWVWNKGYSTNDACNFHIVAIDYGIKRNILRLMAAHGARITIVPANTNVEKILAMNPDGVFLSNGPGDPTATANYAVPTIQALIDSNIPLFGICLGHQLLALAVGAKTIKMHQGHHGANHPVKDFITRKVEIASMNHGFAVETTSLPEHVEETHISLFDNSNCGLRIIGKPVFSVQHHPEASPGPQDSHYLFQRFFNLIMDYKRTA.

CPSase regions lie at residues 1–205 (MTQT…TNDA) and 1–207 (MTQT…DACN). L-glutamine is bound by residues S60, G257, and G259. Positions 209-397 (HIVAIDYGIK…FNLIMDYKRT (189 aa)) constitute a Glutamine amidotransferase type-1 domain. The active-site Nucleophile is the C286. Positions 287, 290, 328, 330, and 331 each coordinate L-glutamine. Residues H370 and E372 contribute to the active site.

The protein belongs to the CarA family. As to quaternary structure, composed of two chains; the small (or glutamine) chain promotes the hydrolysis of glutamine to ammonia, which is used by the large (or ammonia) chain to synthesize carbamoyl phosphate. Tetramer of heterodimers (alpha,beta)4.

The catalysed reaction is hydrogencarbonate + L-glutamine + 2 ATP + H2O = carbamoyl phosphate + L-glutamate + 2 ADP + phosphate + 2 H(+). It carries out the reaction L-glutamine + H2O = L-glutamate + NH4(+). Its pathway is amino-acid biosynthesis; L-arginine biosynthesis; carbamoyl phosphate from bicarbonate: step 1/1. It functions in the pathway pyrimidine metabolism; UMP biosynthesis via de novo pathway; (S)-dihydroorotate from bicarbonate: step 1/3. Functionally, small subunit of the glutamine-dependent carbamoyl phosphate synthetase (CPSase). CPSase catalyzes the formation of carbamoyl phosphate from the ammonia moiety of glutamine, carbonate, and phosphate donated by ATP, constituting the first step of 2 biosynthetic pathways, one leading to arginine and/or urea and the other to pyrimidine nucleotides. The small subunit (glutamine amidotransferase) binds and cleaves glutamine to supply the large subunit with the substrate ammonia. In Bartonella quintana (strain Toulouse) (Rochalimaea quintana), this protein is Carbamoyl phosphate synthase small chain.